We begin with the raw amino-acid sequence, 174 residues long: MNSLLIMGYTSFDLGIFNEKDIKVSIIKKTIRRKLINFLEEGLRWIIFTGNLGFEYWALEVAKELQTDYDFQIGTIFSFETHGQNWNESNQVKLAAFKQVDFVKYAFETYESPSQFRQYNDFILENTEGAFVFYDEENETKLKYMVEKMKQNTNYEVYLLDFEDLQETFEEMNE.

This sequence belongs to the UPF0398 family.

In Lactococcus lactis subsp. lactis (strain IL1403) (Streptococcus lactis), this protein is UPF0398 protein YfdB (yfdB).